A 66-amino-acid chain; its full sequence is Large ribosomal subunit protein bL33c (66 aa).

The protein belongs to the bacterial ribosomal protein bL33 family.

It localises to the plastid. The protein localises to the chloroplast. This chain is Large ribosomal subunit protein bL33c, found in Manihot esculenta (Cassava).